The following is a 214-amino-acid chain: Adenylate kinase (214 aa).

Residue 10–15 participates in ATP binding; it reads GAGKGT. Residues 30 to 59 are NMP; that stretch reads STGDMLRAAIKAGTELGKQAKTLMDAGQLV. Residues Thr-31, Arg-36, 57-59, 85-88, and Gln-92 contribute to the AMP site; these read QLV and GFPR. Residues 122–159 are LID; that stretch reads GRRVHPASGRSYHVVYNPPKVEGKDDVTGEDLIIRADD. Residues Arg-123 and 132–133 contribute to the ATP site; that span reads SY. Arg-156 and Arg-167 together coordinate AMP. Gln-200 is a binding site for ATP.

The protein belongs to the adenylate kinase family. In terms of assembly, monomer.

It is found in the cytoplasm. The catalysed reaction is AMP + ATP = 2 ADP. The protein operates within purine metabolism; AMP biosynthesis via salvage pathway; AMP from ADP: step 1/1. Catalyzes the reversible transfer of the terminal phosphate group between ATP and AMP. Plays an important role in cellular energy homeostasis and in adenine nucleotide metabolism. This Actinobacillus succinogenes (strain ATCC 55618 / DSM 22257 / CCUG 43843 / 130Z) protein is Adenylate kinase.